The following is a 252-amino-acid chain: uncharacterized protein (252 aa).

A run of 6 helical transmembrane segments spans residues 5 to 25 (LTSL…IVSF), 29 to 49 (LALV…GTFI), 61 to 81 (IAGI…GLYF), 141 to 161 (ILPS…PGII), 179 to 199 (WLLL…SKWW), and 217 to 237 (IGWI…LIQF).

Belongs to the DedA family.

Its subcellular location is the cell membrane. This is an uncharacterized protein from Buchnera aphidicola subsp. Schizaphis graminum (strain Sg).